Here is a 506-residue protein sequence, read N- to C-terminus: MVVRDYNTELTYIERISTNSFRIKKGFQPNMNVEGIFYANSRLEKLMFDELRNSCRPGMTGGFLPGVKQIANVAALPGIVGRSVGLPDIHSGYGFAIGNMAAFDMSDPTSIVSPGGVGFDINCGVRLLRTNLFEKDVKPVQEQLAQSLFDHIPVGVGSKGIIPMNAHDLEEALEMGMDWSLREGYVWAEDKEHCEEYGRMLTADPSKVSMRAKKRGLPQLGTLGAGNHYAEIQVVEEIYDKYAASKMGIEELGQICVMIHSGSRGFGHQVATDALVEMEKAMKRDKIETNDRQLACARINSVEGQNYLKAMSAAANFAWVNRSSMTFLTRQAFAKQFNTTPDDLDMHVIYDVSHNVAKIEEHIVDGRPKQLLVHRKGSTRAFPPHHPLIPVDYQLTGQPVLVGGSMGTCSFVLTGTEKGMAETFGSTCHGAGRSLSRAKSRRNLDYKDVLRDLEAKGISIRVASPKLVQEEAPDSYKDVRDVVQTCHDVGISSKCIKLRPIAVIKG.

The Mn(2+) site is built by Asp120, Cys123, His228, His260, and His354. 227-231 (NHYAE) contacts GMP. Residues 354–355 (HN), 403–406 (GGSM), Ser410, 429–432 (HGAG), and Lys505 contribute to the GMP site. His429 functions as the GMP-histidine intermediate in the catalytic mechanism.

Belongs to the RtcB family. Catalytic component of the tRNA-splicing ligase complex. Requires Mn(2+) as cofactor.

The catalysed reaction is a 3'-end 3'-phospho-ribonucleotide-RNA + a 5'-end dephospho-ribonucleoside-RNA + GTP = a ribonucleotidyl-ribonucleotide-RNA + GMP + diphosphate. The enzyme catalyses a 3'-end 2',3'-cyclophospho-ribonucleotide-RNA + a 5'-end dephospho-ribonucleoside-RNA + GTP + H2O = a ribonucleotidyl-ribonucleotide-RNA + GMP + diphosphate + H(+). In terms of biological role, catalytic subunit of the tRNA-splicing ligase complex that acts by directly joining spliced tRNA halves to mature-sized tRNAs by incorporating the precursor-derived splice junction phosphate into the mature tRNA as a canonical 3',5'-phosphodiester. May act as an RNA ligase with broad substrate specificity, and may function toward other RNAs. The chain is RNA-splicing ligase RtcB homolog 1 from Culex quinquefasciatus (Southern house mosquito).